A 130-amino-acid chain; its full sequence is Small ribosomal subunit protein uS9 (130 aa).

It belongs to the universal ribosomal protein uS9 family.

The chain is Small ribosomal subunit protein uS9 from Desulfovibrio desulfuricans (strain ATCC 27774 / DSM 6949 / MB).